Reading from the N-terminus, the 206-residue chain is Probable glutathione peroxidase 3, mitochondrial (206 aa).

The N-terminal 12 residues, 1–12 (MPRSSRWVNQRA), are a transit peptide targeting the mitochondrion. The active site involves Cys80.

It belongs to the glutathione peroxidase family. In terms of assembly, interacts with ABI1 and ABI2. In terms of tissue distribution, ubiquitous.

The protein localises to the mitochondrion. It carries out the reaction 2 glutathione + H2O2 = glutathione disulfide + 2 H2O. The redox states are modulated by H(2)O(2). Functionally, may constitute a glutathione peroxidase-like protective system against oxidative stresses. Involved positively in abscisic acid (ABA) signaling pathway that regulates numerous ABA responses, such as stomatal closure, seed germination and inhibition of vegetative growth. Oxidizes and represses target proteins (e.g. the phosphatase activity of ABI1 and ABI2) when oxidized by H(2)O(2), probably after ABA signaling. Modulates the calcium channel activity in guard cells in response to ABA or H(2)O(2). Confers tolerance to drought stress, by enhancing the ABA-dependent stomatal closure. The sequence is that of Probable glutathione peroxidase 3, mitochondrial (GPX3) from Arabidopsis thaliana (Mouse-ear cress).